The sequence spans 776 residues: Transcription factor MYB3R-1 (776 aa).

Positions 1–41 (MKREMKAPTTPLESLQGDLKGKQGRTSGPARRSTKGQWTPE) are disordered. HTH myb-type domains follow at residues 30–81 (ARRS…QKVL), 82–137 (NPEL…NPGI), and 138–188 (NKNA…KKKL). DNA-binding regions (H-T-H motif) lie at residues 58–81 (WKKIAECFKDRTDVQCLHRWQKVL), 110–133 (WSTISQHLPGRIGKQCRERWHNHL), and 161–184 (WAELMKFLPGRSDNSIKNHWNSSV). Disordered regions lie at residues 217–253 (SSWMHSNGDEGSSRPGVDAEESECSQASTVFSQSTND), 364–384 (FQSSVRLSDQPFLSNSDTDPE), and 401–435 (DNMKDSSTSSGEQGRNMVDPQNGKGSLCSQAAETH). Composition is skewed to polar residues over residues 240–253 (CSQASTVFSQSTND), 364–380 (FQSSVRLSDQPFLSNSD), and 423–432 (GKGSLCSQAA). A Nuclear localization signal motif is present at residues 648–655 (KKRHRDLL).

Component of a DREAM-like complex which modulates a variety of developmentally regulated genes and of the mitotic genes in proliferating and differentiated cells. As to expression, expressed ubiquitously at low levels. Expressed in roots, cotyledons, flowers and leaves, especially in vascular tissues.

It localises to the nucleus. Its function is as follows. Transcription factor that binds 5'-AACGG-3' motifs in gene promoters. Transcription activator involved in the regulation of cytokinesis, probably via the activation of several G2/M phase-specific genes transcription (e.g. KNOLLE). Transcription repressor that regulates organ growth. Binds to the promoters of G2/M-specific genes and to E2F target genes to prevent their expression in post-mitotic cells and to restrict the time window of their expression in proliferating cells. Required for the maintenance of diploidy. This is Transcription factor MYB3R-1 from Arabidopsis thaliana (Mouse-ear cress).